The primary structure comprises 293 residues: ATP synthase gamma chain (293 aa).

The protein belongs to the ATPase gamma chain family. F-type ATPases have 2 components, CF(1) - the catalytic core - and CF(0) - the membrane proton channel. CF(1) has five subunits: alpha(3), beta(3), gamma(1), delta(1), epsilon(1). CF(0) has three main subunits: a, b and c.

The protein localises to the cell membrane. Its function is as follows. Produces ATP from ADP in the presence of a proton gradient across the membrane. The gamma chain is believed to be important in regulating ATPase activity and the flow of protons through the CF(0) complex. The chain is ATP synthase gamma chain from Streptococcus agalactiae serotype Ia (strain ATCC 27591 / A909 / CDC SS700).